The chain runs to 512 residues: Putative ribose/galactose/methyl galactoside import ATP-binding protein 1 (512 aa).

ABC transporter domains lie at 14-251 (IALT…VGRQ) and 262-507 (TSAN…TQRE). Residue 46 to 53 (GENGAGKS) participates in ATP binding.

The protein belongs to the ABC transporter superfamily. Carbohydrate importer 2 (CUT2) (TC 3.A.1.2) family.

It is found in the cell inner membrane. The enzyme catalyses D-ribose(out) + ATP + H2O = D-ribose(in) + ADP + phosphate + H(+). It catalyses the reaction D-galactose(out) + ATP + H2O = D-galactose(in) + ADP + phosphate + H(+). Part of an ABC transporter complex involved in carbohydrate import. Could be involved in ribose, galactose and/or methyl galactoside import. Responsible for energy coupling to the transport system. The chain is Putative ribose/galactose/methyl galactoside import ATP-binding protein 1 from Burkholderia lata (strain ATCC 17760 / DSM 23089 / LMG 22485 / NCIMB 9086 / R18194 / 383).